A 278-amino-acid chain; its full sequence is 4-diphosphocytidyl-2-C-methyl-D-erythritol kinase (278 aa).

Lys10 is an active-site residue. ATP is bound at residue 93–103 (PMGGGLGGGSS). The active site involves Asp135.

This sequence belongs to the GHMP kinase family. IspE subfamily.

It carries out the reaction 4-CDP-2-C-methyl-D-erythritol + ATP = 4-CDP-2-C-methyl-D-erythritol 2-phosphate + ADP + H(+). Its pathway is isoprenoid biosynthesis; isopentenyl diphosphate biosynthesis via DXP pathway; isopentenyl diphosphate from 1-deoxy-D-xylulose 5-phosphate: step 3/6. In terms of biological role, catalyzes the phosphorylation of the position 2 hydroxy group of 4-diphosphocytidyl-2C-methyl-D-erythritol. This Thiobacillus denitrificans (strain ATCC 25259 / T1) protein is 4-diphosphocytidyl-2-C-methyl-D-erythritol kinase.